The primary structure comprises 79 residues: Small ribosomal subunit protein bS18 (79 aa).

It belongs to the bacterial ribosomal protein bS18 family. As to quaternary structure, part of the 30S ribosomal subunit. Forms a tight heterodimer with protein bS6.

Functionally, binds as a heterodimer with protein bS6 to the central domain of the 16S rRNA, where it helps stabilize the platform of the 30S subunit. In Streptococcus agalactiae serotype Ia (strain ATCC 27591 / A909 / CDC SS700), this protein is Small ribosomal subunit protein bS18.